The following is a 421-amino-acid chain: F-box only protein 5 (421 aa).

S85 carries the post-translational modification Phosphoserine. The tract at residues 114–219 is interaction with EVI5; that stretch reads ELEASRLYED…IGKKMGLEHL (106 aa). In terms of domain architecture, F-box spans 223 to 273; the sequence is AELSRRGFVHLLANILTKLSGMDLVNLSKVSRIWKKILENNKGAFQLYSKT. Residues 236–313 form a sufficient for interaction with RPS6KA2; Prevents association of CDC20 with RPS6KA2 region; that stretch reads NILTKLSGMD…KSSTWAPPKK (78 aa). The segment at 236–383 is requires for efficient binding to CDC20; sequence NILTKLSGMD…SCQFEYCTKC (148 aa). An inhibits APC ubiquitin ligase activity region spans residues 280–421; sequence SSKLSLHATT…KKSKKNLQRL (142 aa). The interval 296–299 is competitively blocks access of APC substrates to the D-box coreceptor formed by FZR1 and ANAPC10; the sequence is RAAL. A ZBR-type zinc finger spans residues 348–396; sequence SLKACVRCNFPAKYDHYLERAVCKRESCQFEYCTKCLCAYHNNKDCLNG. The Zn(2+) site is built by C352, C355, C370, C375, C380, C383, H388, and C393. The tract at residues 352–394 is allows a rapid multiple mono-ubiquitination of the APC substrate, but strongly inhibits the slow ubiquitin chain elongation catalyzed by UBCH10; the sequence is CVRCNFPAKYDHYLERAVCKRESCQFEYCTKCLCAYHNNKDCL. Residues 411 to 421 are sufficient to suppress UBE2S activity; essential for interaction with UBE2S; competitively inhibits the rapide ubiquitin chain elongation by UBE2D1 which blocks UBE2D1 with APC; indispensable for recruitment and position of FBXO5 to the catalytic site of APC; abrogates the inhibition of ubiquitin chain assembly primarily catalyzed by UBE2S; inhibits the ubiquitination by either UBE2C or UBE2D1; it reads TKKSKKNLQRL.

As to quaternary structure, part of a SCF (SKP1-cullin-F-box) protein ligase complex. Interacts with BTRC; mediates proteolysis by the SCF ubiquitin ligase complex leading to activation of APC in late mitosis and subsequent mitotic progression. Interacts with FZR1/CDH1 and the N-terminal substrate-binding domain of CDC20; prevents APC activation. Also interacts with EVI5 which blocks its phosphorylation by PLK1 and prevents its subsequent binding to BTRC and degradation. Interacts simultaneously with anaphase promoting complex (APC), through at least ANAPC2, CDC23, CDC27, the APC substrate GMNN and the APC activator FZR1. Interacts with UBE2S; interferes with the activity of UBE2S mainly by disrupting the dynamic electrostatic association between the C-terminal tail of UBE2S and ANAPC2. Interacts with RPS6KA2; cooperates to induce the metaphase arrest of early blastomeres; increases and stabilizes interaction of FBXO5 with CDC20. In terms of processing, phosphorylation by CDK2 and subsequently by PLK1 triggers degradation during early mitosis through ubiquitin-mediated proteolysis by the SCF ubiquitin ligase complex containing the F-box protein BTRC. This degradation is necessary for the activation of APC in late mitosis and subsequent mitotic progression. Phosphorylated by RPS6KA2; increases and stabilizes interaction with CDC20. Ubiquitinated by the SCF(BTRC) complex following phosphorylation by PLK1. Undergoes both 'Lys-11' and 'Lys-48'-linked polyubiquitination by APC-FZR1 complex leading to degradation during G1 phase by the proteasome. Degraded through the SCF(BTRC) complex; degradation occurs during oocyte maturation, between germinal vesicle breakdown (GVBD) and meiosis I, and is required for the meiosis I-meiosis II transition. As to expression, expressed in oocytes and granulosa cells. Expressed in proliferating cells compartments in hair follicle and skin epidermis, spermatogonia, and intestinal crypts.

Its subcellular location is the nucleus. The protein resides in the cytoplasm. It is found in the cytoskeleton. The protein localises to the spindle. It participates in protein modification; protein ubiquitination. Its function is as follows. Regulator of APC activity during mitotic and meiotic cell cycle. During mitotic cell cycle plays a role as both substrate and inhibitor of APC-FZR1 complex. During G1 phase, plays a role as substrate of APC-FZR1 complex E3 ligase. Then switches as an inhibitor of APC-FZR1 complex during S and G2 leading to cell-cycle commitment. As APC inhibitor, prevents the degradation of APC substrates at multiple levels: by interacting with APC and blocking access of APC substrates to the D-box co-receptor, formed by FZR1 and ANAPC10; by suppressing ubiquitin ligation and chain elongation by APC by preventing the UBE2C and UBE2S activities. Plays a role in genome integrity preservation by coordinating DNA replication with mitosis through APC inhibition in interphase to stabilize CCNA2 and GMNN in order to promote mitosis and prevent rereplication and DNA damage-induced cellular senescence. During oocyte maturation, plays a role in meiosis through inactivation of APC-FZR1 complex. Inhibits APC through RPS6KA2 interaction that increases FBXO5 affiniy for CDC20 leading to the metaphase arrest of the second meiotic division before fertilization. Controls entry into the first meiotic division through inactivation of APC-FZR1 complex. Promotes migration and osteogenic differentiation of mesenchymal stem cells. This chain is F-box only protein 5, found in Mus musculus (Mouse).